The primary structure comprises 660 residues: Polyadenylate-binding protein 3 (660 aa).

4 RRM domains span residues 49–126, 136–213, 229–306, and 332–409; these read SSLY…LSNR, GNIF…HFIR, TNVY…RAQK, and ANLY…LAQR. The region spanning 571-648 is the PABC domain; the sequence is PISKLTSSLA…ALDVLRLSVD (78 aa).

It belongs to the polyadenylate-binding protein type-1 family. In terms of tissue distribution, expressed predominantly in immature flowers. Detected in tapetum and pollen. Strongly expressed in immatures siliques.

The protein resides in the cytoplasm. Its subcellular location is the nucleus. Binds the poly(A) tail of mRNA. Appears to be an important mediator of the multiple roles of the poly(A) tail in mRNA biogenesis, stability and translation. In the cytoplasm, affects both translation and mRNA decay. Inhibits the polyadenylated RNA degradation by the Rrp41p 3'--&gt;5' exonuclease in vitro. Binds with the 5'UTRs of PAB2, PAB3 and with a lower affinity with the 5'UTR of PAB5. This Arabidopsis thaliana (Mouse-ear cress) protein is Polyadenylate-binding protein 3 (PAB3).